Here is a 163-residue protein sequence, read N- to C-terminus: Cyanate hydratase (163 aa).

Catalysis depends on residues R103, E106, and S129.

It belongs to the cyanase family.

It catalyses the reaction cyanate + hydrogencarbonate + 3 H(+) = NH4(+) + 2 CO2. In terms of biological role, catalyzes the reaction of cyanate with bicarbonate to produce ammonia and carbon dioxide. The chain is Cyanate hydratase from Ajellomyces capsulatus (strain H143) (Darling's disease fungus).